The chain runs to 119 residues: cAMP-responsive element-binding protein-like 2 (119 aa).

A disordered region spans residues 1-23 (MDDSKIVAGKVKKPGKRGRKPAK). The span at 10–21 (KVKKPGKRGRKP) shows a compositional bias: basic residues. Residues 23–86 (KIDLKAKLER…LAMDQGKIPS (64 aa)) enclose the bZIP domain. The segment at 29 to 60 (KLERSRQSARECRARKKLRYQYLEELVSSKER) is basic motif. Residues 62–69 (ICALREEL) are leucine-zipper. Residues 95–119 (DEQKTPQSCSNKTTKNSKYSSSSGI) form a disordered region. Residues 102 to 119 (SCSNKTTKNSKYSSSSGI) are compositionally biased toward low complexity.

Belongs to the bZIP family. ATF subfamily.

The protein localises to the nucleus. In terms of biological role, probable regulator of creb1 transcriptional activity which is involved in adipose cells differentiation. May also play a regulatory role in the cell cycle. In Danio rerio (Zebrafish), this protein is cAMP-responsive element-binding protein-like 2 (crebl2).